The chain runs to 213 residues: uncharacterized protein (213 aa).

This is an uncharacterized protein from Magallana gigas (Pacific oyster).